The sequence spans 410 residues: Argininosuccinate synthase (410 aa).

ATP-binding positions include 13–21 (AYSGGLDTS) and A40. L-citrulline contacts are provided by Y91 and S96. G121 contributes to the ATP binding site. Residues T123, N127, and D128 each coordinate L-aspartate. Position 127 (N127) interacts with L-citrulline. The L-citrulline site is built by R131, S182, S191, E267, and Y279.

It belongs to the argininosuccinate synthase family. Type 1 subfamily. In terms of assembly, homotetramer.

It is found in the cytoplasm. The catalysed reaction is L-citrulline + L-aspartate + ATP = 2-(N(omega)-L-arginino)succinate + AMP + diphosphate + H(+). The protein operates within amino-acid biosynthesis; L-arginine biosynthesis; L-arginine from L-ornithine and carbamoyl phosphate: step 2/3. The protein is Argininosuccinate synthase of Gluconobacter oxydans (strain 621H) (Gluconobacter suboxydans).